A 180-amino-acid polypeptide reads, in one-letter code: Large ribosomal subunit protein uL5 (180 aa).

It belongs to the universal ribosomal protein uL5 family. As to quaternary structure, part of the 50S ribosomal subunit; part of the 5S rRNA/L5/L18/L25 subcomplex. Contacts the 5S rRNA and the P site tRNA. Forms a bridge to the 30S subunit in the 70S ribosome.

This is one of the proteins that bind and probably mediate the attachment of the 5S RNA into the large ribosomal subunit, where it forms part of the central protuberance. In the 70S ribosome it contacts protein S13 of the 30S subunit (bridge B1b), connecting the 2 subunits; this bridge is implicated in subunit movement. Contacts the P site tRNA; the 5S rRNA and some of its associated proteins might help stabilize positioning of ribosome-bound tRNAs. The protein is Large ribosomal subunit protein uL5 of Brevibacillus brevis (strain 47 / JCM 6285 / NBRC 100599).